Reading from the N-terminus, the 153-residue chain is MEVILKQDVEKLGHQGDVVKVAEGYGRNYLLPKKLAIEATAANKAVIEQMKAAAVRRIAREKTDAESLAKQFDGVTVTFTRRAGESNQLFGSVTTSDIATELEHKGFKLDRRKLSLVEPIKTTGDFKVALKLHRDVTVDIPVHVAKEAEVAAQ.

This sequence belongs to the bacterial ribosomal protein bL9 family.

Its function is as follows. Binds to the 23S rRNA. The polypeptide is Large ribosomal subunit protein bL9 (Koribacter versatilis (strain Ellin345)).